The following is a 182-amino-acid chain: MNKLSTKLVVAIGIGAALYGILGLWGFSIAPNTFIKPALAILTIFGALFGPVAGLLIGLIGHTVTDTIAGWGIWWGWVFSSGIIGFAMGLIQKRVGFSVKNGTYNKGDISYLAITGLIGIVIAIIFAGAFDIIVMGEPFDKIVIQVLGATIADVIVFLVLGLPITIGLAKSNKKHTHLKIEK.

5 helical membrane passes run 9–29 (VVAIGIGAALYGILGLWGFSI), 40–60 (AILTIFGALFGPVAGLLIGLI), 71–91 (WGIWWGWVFSSGIIGFAMGLI), 114–134 (ITGLIGIVIAIIFAGAFDIIV), and 142–162 (IVIQVLGATIADVIVFLVLGL).

It belongs to the UPF0397 family.

The protein localises to the cell membrane. In Bacillus cereus (strain ATCC 10987 / NRS 248), this protein is UPF0397 protein BCE_2667.